We begin with the raw amino-acid sequence, 279 residues long: Rhamnulose-1-phosphate aldolase (279 aa).

Glu115 is an active-site residue. Zn(2+) contacts are provided by His138, His140, and His209.

The protein belongs to the aldolase class II family. RhaD subfamily. It depends on Zn(2+) as a cofactor.

The protein localises to the cytoplasm. The catalysed reaction is L-rhamnulose 1-phosphate = (S)-lactaldehyde + dihydroxyacetone phosphate. Its pathway is carbohydrate degradation; L-rhamnose degradation; glycerone phosphate from L-rhamnose: step 3/3. Catalyzes the reversible cleavage of L-rhamnulose-1-phosphate to dihydroxyacetone phosphate (DHAP) and L-lactaldehyde. This Enterococcus faecalis (strain ATCC 700802 / V583) protein is Rhamnulose-1-phosphate aldolase.